The primary structure comprises 397 residues: Elongation factor Tu (397 aa).

The tr-type G domain occupies 10–206 (KPHVNIGTIG…AVDESIPEPQ (197 aa)). Residues 19–26 (GHIDHGKT) are G1. Residue 19 to 26 (GHIDHGKT) participates in GTP binding. Thr26 contacts Mg(2+). The interval 62 to 66 (GITIS) is G2. Residues 83 to 86 (DCPG) form a G3 region. Residues 83 to 87 (DCPGH) and 138 to 141 (NKAD) each bind GTP. The tract at residues 138–141 (NKAD) is G4. The interval 176-178 (SAL) is G5.

Belongs to the TRAFAC class translation factor GTPase superfamily. Classic translation factor GTPase family. EF-Tu/EF-1A subfamily. Monomer.

The protein resides in the cytoplasm. It carries out the reaction GTP + H2O = GDP + phosphate + H(+). In terms of biological role, GTP hydrolase that promotes the GTP-dependent binding of aminoacyl-tRNA to the A-site of ribosomes during protein biosynthesis. This is Elongation factor Tu from Frankia casuarinae (strain DSM 45818 / CECT 9043 / HFP020203 / CcI3).